We begin with the raw amino-acid sequence, 191 residues long: Inosine triphosphate pyrophosphatase (191 aa).

ITP is bound at residue 15–20 (TGNTNK). E43 provides a ligand contact to Mg(2+). Residues K55, 71-72 (DT), K88, 147-150 (FGWD), K168, and 173-174 (HR) each bind ITP.

The protein belongs to the HAM1 NTPase family. As to quaternary structure, homodimer. Mg(2+) serves as cofactor. It depends on Mn(2+) as a cofactor.

The protein localises to the cytoplasm. It is found in the nucleus. The catalysed reaction is ITP + H2O = IMP + diphosphate + H(+). The enzyme catalyses dITP + H2O = dIMP + diphosphate + H(+). It carries out the reaction XTP + H2O = XMP + diphosphate + H(+). In terms of biological role, pyrophosphatase that hydrolyzes non-canonical purine nucleotides such as inosine triphosphate (ITP), deoxyinosine triphosphate (dITP) or xanthosine 5'-triphosphate (XTP) to their respective monophosphate derivatives. The enzyme does not distinguish between the deoxy- and ribose forms. Probably excludes non-canonical purines from RNA and DNA precursor pools, thus preventing their incorporation into RNA and DNA and avoiding chromosomal lesions. This chain is Inosine triphosphate pyrophosphatase, found in Chaetomium globosum (strain ATCC 6205 / CBS 148.51 / DSM 1962 / NBRC 6347 / NRRL 1970) (Soil fungus).